The sequence spans 86 residues: Putative antitoxin VapB5 (86 aa).

The protein belongs to the phD/YefM antitoxin family. Forms a complex with VapC5.

In terms of biological role, probable antitoxin component of a probable type II toxin-antitoxin (TA) system. The cognate toxin is VapC5. This Mycobacterium tuberculosis (strain CDC 1551 / Oshkosh) protein is Putative antitoxin VapB5 (vapB5).